A 251-amino-acid chain; its full sequence is CDP-diacylglycerol pyrophosphatase (251 aa).

Residues Ala-4 to Trp-24 form a helical membrane-spanning segment.

The protein belongs to the Cdh family.

It is found in the cell inner membrane. The catalysed reaction is a CDP-1,2-diacyl-sn-glycerol + H2O = a 1,2-diacyl-sn-glycero-3-phosphate + CMP + 2 H(+). It participates in phospholipid metabolism; CDP-diacylglycerol degradation; phosphatidate from CDP-diacylglycerol: step 1/1. This is CDP-diacylglycerol pyrophosphatase from Escherichia coli O8 (strain IAI1).